Here is a 114-residue protein sequence, read N- to C-terminus: MSIGLLCCVAFSLLWAGPVNAGVTQTPKFHILKTGQSMTLQCAQDMNHGYLSWYRQDPGMGLRRIHYSVAAGITDKGEVPDGYNVSRSNTEDFPLRLESAAPSQTSVYFCASSY.

The N-terminal stretch at 1–21 is a signal peptide; that stretch reads MSIGLLCCVAFSLLWAGPVNA. The Ig-like domain maps to 22–114; the sequence is GVTQTPKFHI…TSVYFCASSY (93 aa). An intrachain disulfide couples cysteine 42 to cysteine 110. Residue asparagine 84 is glycosylated (N-linked (GlcNAc...) asparagine).

Alpha-beta TR is a heterodimer composed of an alpha and beta chain; disulfide-linked. The alpha-beta TR is associated with the transmembrane signaling CD3 coreceptor proteins to form the TR-CD3 (TcR or TCR). The assembly of alpha-beta TR heterodimers with CD3 occurs in the endoplasmic reticulum where a single alpha-beta TR heterodimer associates with one CD3D-CD3E heterodimer, one CD3G-CD3E heterodimer and one CD247 homodimer forming a stable octameric structure. CD3D-CD3E and CD3G-CD3E heterodimers preferentially associate with TR alpha and TR beta chains, respectively. The association of the CD247 homodimer is the last step of TcR assembly in the endoplasmic reticulum and is required for transport to the cell surface.

The protein localises to the cell membrane. Its function is as follows. V region of the variable domain of T cell receptor (TR) beta chain that participates in the antigen recognition. Alpha-beta T cell receptors are antigen specific receptors which are essential to the immune response and are present on the cell surface of T lymphocytes. Recognize peptide-major histocompatibility (MH) (pMH) complexes that are displayed by antigen presenting cells (APC), a prerequisite for efficient T cell adaptive immunity against pathogens. Binding of alpha-beta TR to pMH complex initiates TR-CD3 clustering on the cell surface and intracellular activation of LCK that phosphorylates the ITAM motifs of CD3G, CD3D, CD3E and CD247 enabling the recruitment of ZAP70. In turn ZAP70 phosphorylates LAT, which recruits numerous signaling molecules to form the LAT signalosome. The LAT signalosome propagates signal branching to three major signaling pathways, the calcium, the mitogen-activated protein kinase (MAPK) kinase and the nuclear factor NF-kappa-B (NF-kB) pathways, leading to the mobilization of transcription factors that are critical for gene expression and essential for T cell growth and differentiation. The T cell repertoire is generated in the thymus, by V-(D)-J rearrangement. This repertoire is then shaped by intrathymic selection events to generate a peripheral T cell pool of self-MH restricted, non-autoaggressive T cells. Post-thymic interaction of alpha-beta TR with the pMH complexes shapes TR structural and functional avidity. The chain is T cell receptor beta variable 6-9 from Homo sapiens (Human).